The sequence spans 253 residues: Shikimate dehydrogenase (253 aa).

The Proton acceptor role is filled by Lys63. 115-119 (GAGGA) contacts NADP(+).

Belongs to the shikimate dehydrogenase family.

The enzyme catalyses shikimate + NADP(+) = 3-dehydroshikimate + NADPH + H(+). It functions in the pathway metabolic intermediate biosynthesis; chorismate biosynthesis; chorismate from D-erythrose 4-phosphate and phosphoenolpyruvate: step 4/7. In Thermotoga neapolitana (strain ATCC 49049 / DSM 4359 / NBRC 107923 / NS-E), this protein is Shikimate dehydrogenase (aroE).